The following is a 670-amino-acid chain: C6 finger domain transcription factor iacK (670 aa).

The segment at 1–84 is disordered; the sequence is MNTSPDYAQP…GEPKQSGPTV (84 aa). Pro residues predominate over residues 44 to 54; sequence GPPPPPPPPPT. Residues 55–74 show a composition bias toward low complexity; that stretch reads ATATAATAAATTTTAAPSAT. Positions 88–114 form a DNA-binding region, zn(2)-C6 fungal-type; it reads CLACRSKHLKCDGGNPCARCQASESIC. The disordered stretch occupies residues 122–157; that stretch reads GYKGPRRNGTQNPNKRHAAASDDGSPNSNGSNESCP. Positions 142–155 are enriched in low complexity; that stretch reads SDDGSPNSNGSNES.

The protein localises to the nucleus. Functionally, transcription factor; part of the gene cluster that mediates the biosynthesis of iso-A82775C, a enylepoxycyclohexane and biosynthetic precursor of the chloropestolide anticancer natural products. The protein is C6 finger domain transcription factor iacK of Pestalotiopsis fici (strain W106-1 / CGMCC3.15140).